Reading from the N-terminus, the 377-residue chain is Probable protein phosphatase 2C 61 (377 aa).

The PPM-type phosphatase domain occupies 30 to 338; it reads AAGEFSMAAA…DDITAVVVFL (309 aa). The Mn(2+) site is built by D64, G65, D269, and D329.

Belongs to the PP2C family. Requires Mg(2+) as cofactor. Mn(2+) serves as cofactor.

It catalyses the reaction O-phospho-L-seryl-[protein] + H2O = L-seryl-[protein] + phosphate. The catalysed reaction is O-phospho-L-threonyl-[protein] + H2O = L-threonyl-[protein] + phosphate. The chain is Probable protein phosphatase 2C 61 from Oryza sativa subsp. japonica (Rice).